The primary structure comprises 523 residues: NADP-specific glutamate dehydrogenase (523 aa).

Positions 26-50 (CARGRSAKRDVAAKRLRSRSPRMDA) are disordered. The active site involves lysine 202.

This sequence belongs to the Glu/Leu/Phe/Val dehydrogenases family. Homo- and heterohexamer of alpha and beta subunits. Both subunits are encoded by the same gene. In terms of processing, the N-termini of the alpha and the beta chains are blocked.

It is found in the plastid. Its subcellular location is the chloroplast. It carries out the reaction L-glutamate + NADP(+) + H2O = 2-oxoglutarate + NH4(+) + NADPH + H(+). The sequence is that of NADP-specific glutamate dehydrogenase from Chlorella sorokiniana (Freshwater green alga).